The chain runs to 380 residues: Probable dual-specificity RNA methyltransferase RlmN (380 aa).

The active-site Proton acceptor is the Glu112. Residues 118–358 (YPDRVTACLS…TTVRDTRGRE (241 aa)) enclose the Radical SAM core domain. Cys125 and Cys363 are disulfide-bonded. 3 residues coordinate [4Fe-4S] cluster: Cys132, Cys136, and Cys139. S-adenosyl-L-methionine contacts are provided by residues 187 to 188 (GE), Ser221, 244 to 246 (SLH), and Asn320. The S-methylcysteine intermediate role is filled by Cys363.

This sequence belongs to the radical SAM superfamily. RlmN family. It depends on [4Fe-4S] cluster as a cofactor.

The protein resides in the cytoplasm. It carries out the reaction adenosine(2503) in 23S rRNA + 2 reduced [2Fe-2S]-[ferredoxin] + 2 S-adenosyl-L-methionine = 2-methyladenosine(2503) in 23S rRNA + 5'-deoxyadenosine + L-methionine + 2 oxidized [2Fe-2S]-[ferredoxin] + S-adenosyl-L-homocysteine. The enzyme catalyses adenosine(37) in tRNA + 2 reduced [2Fe-2S]-[ferredoxin] + 2 S-adenosyl-L-methionine = 2-methyladenosine(37) in tRNA + 5'-deoxyadenosine + L-methionine + 2 oxidized [2Fe-2S]-[ferredoxin] + S-adenosyl-L-homocysteine. Its function is as follows. Specifically methylates position 2 of adenine 2503 in 23S rRNA and position 2 of adenine 37 in tRNAs. The chain is Probable dual-specificity RNA methyltransferase RlmN from Salinispora arenicola (strain CNS-205).